The following is a 953-amino-acid chain: ATP-dependent 6-phosphofructokinase (953 aa).

The segment at 1–558 (MIEGISFASF…QLQGFLLTNS (558 aa)) is N-terminal catalytic PFK domain 1. ATP contacts are provided by residues Gly193, 256–257 (RC), and 286–289 (GDGS). Asp287 contacts Mg(2+). Residues 332 to 334 (SID), Arg369, 376 to 378 (MGR), Glu433, Arg460, and 466 to 469 (HVQR) contribute to the substrate site. The active-site Proton acceptor is Asp334. Positions 559 to 572 (ADKDRPQEPAKDPL) are interdomain linker. The interval 573-953 (RVAIVCTGAP…AKEQGIIDPC (381 aa)) is C-terminal regulatory PFK domain 2. Beta-D-fructose 2,6-bisphosphate is bound by residues Arg645, 702–706 (TISNN), Arg740, 747–749 (QGG), Glu807, Arg833, 839–842 (HVQQ), and Arg906.

Belongs to the phosphofructokinase type A (PFKA) family. ATP-dependent PFK group I subfamily. Eukaryotic two domain clade 'E' sub-subfamily. In terms of assembly, heterooctamer of 4 alpha and 4 beta chains. The cofactor is Mg(2+).

Its subcellular location is the cytoplasm. The enzyme catalyses beta-D-fructose 6-phosphate + ATP = beta-D-fructose 1,6-bisphosphate + ADP + H(+). It functions in the pathway carbohydrate degradation; glycolysis; D-glyceraldehyde 3-phosphate and glycerone phosphate from D-glucose: step 3/4. With respect to regulation, allosterically activated by ADP, AMP, or fructose 2,6-bisphosphate, and allosterically inhibited by ATP or citrate. Catalyzes the phosphorylation of D-fructose 6-phosphate to fructose 1,6-bisphosphate by ATP, the first committing step of glycolysis. This is ATP-dependent 6-phosphofructokinase (PFK1) from Yarrowia lipolytica (strain CLIB 122 / E 150) (Yeast).